The sequence spans 127 residues: MAVIVIADKNTGKTYKKEIDQNVIGLLTGRRIGDEIDGSFFEMPGYKLKITGGSANNGFPMKKDLPIAGKKRILITYTHGRKGKNGIRKRVTLRGNIVGSDISQLNMIITQYGPQPLEKPEEQKGEQ.

Belongs to the eukaryotic ribosomal protein eS6 family.

This Picrophilus torridus (strain ATCC 700027 / DSM 9790 / JCM 10055 / NBRC 100828 / KAW 2/3) protein is Small ribosomal subunit protein eS6.